The following is a 262-amino-acid chain: MPIPGTPSRAELAEHLVRTRIAGDVATPRENNLSHYRKLANGDRGFWLGLELGDRWSDEQDVLAVMAERVGVNDDPEHRYGQDTIDPELTISALERMAGRLRKAADGGQRVLFATGHPGGLLDVHRATAAALRDAGCEIVVIPEGLTTEEGYVQQFADVSVLEHGASLWHTHSGEPMKAILTGLEREGRPLPDLVVADHGWAGYAAQHGVDSVGYADCNDPALFLAESEGTLQVAVPLDDHVVSPRYYDPMTAYLLTEAGLK.

Displays phosphatase activity against p-nitrophenyl phosphate (pNPP) in vitro; however, the physiological substrate is unknown. This Streptomyces coelicolor (strain ATCC BAA-471 / A3(2) / M145) protein is Phosphatase SCO2771.